The following is a 264-amino-acid chain: Thymidylate synthase (264 aa).

Residue Arg-21 participates in dUMP binding. A (6R)-5,10-methylene-5,6,7,8-tetrahydrofolate-binding site is contributed by His-51. 126 to 127 serves as a coordination point for dUMP; sequence RR. Cys-146 acts as the Nucleophile in catalysis. DUMP contacts are provided by residues 166–169, Asn-177, and 207–209; these read RSCD and HLY. Residue Asp-169 coordinates (6R)-5,10-methylene-5,6,7,8-tetrahydrofolate. Ser-263 serves as a coordination point for (6R)-5,10-methylene-5,6,7,8-tetrahydrofolate.

It belongs to the thymidylate synthase family. Bacterial-type ThyA subfamily. Homodimer.

It is found in the cytoplasm. The enzyme catalyses dUMP + (6R)-5,10-methylene-5,6,7,8-tetrahydrofolate = 7,8-dihydrofolate + dTMP. Its pathway is pyrimidine metabolism; dTTP biosynthesis. Catalyzes the reductive methylation of 2'-deoxyuridine-5'-monophosphate (dUMP) to 2'-deoxythymidine-5'-monophosphate (dTMP) while utilizing 5,10-methylenetetrahydrofolate (mTHF) as the methyl donor and reductant in the reaction, yielding dihydrofolate (DHF) as a by-product. This enzymatic reaction provides an intracellular de novo source of dTMP, an essential precursor for DNA biosynthesis. The sequence is that of Thymidylate synthase from Buchnera aphidicola subsp. Schizaphis graminum (strain Sg).